Reading from the N-terminus, the 500-residue chain is NAD(P)H-quinone oxidoreductase chain 4, chloroplastic (500 aa).

14 helical membrane-spanning segments follow: residues 4–24, 37–57, 87–107, 113–130, 134–154, 167–187, 211–231, 242–262, 272–292, 313–333, 334–354, 386–406, 417–437, and 462–482; these read FPWLTILVVLPIFAGSLIFFL, ISICLLEFLLMTYAFCYHFQL, VGSILLTGFITTLATLAAWPV, LFYFLMLAMYSGQIGLFS, LLLFFIMWELELIPVYLLLSM, FILYTAGGSIFFLIGVLGMGL, ILLYFGFLIAYAVKLPIIPLH, HYSTCMLLAGILLKMGAYGLI, AHYLFSPWLVIIGAIQIIYAA, MGFIIIGIGSITNIGLNGAIL, QILSHGFIGATLFFLAGTASD, LALPGMSGFVAELVVFFGLIT, LITFVMAIGMILTPIYLLSML, and LFILICIFLPVIGIGIYPDLV.

Belongs to the complex I subunit 4 family.

It is found in the plastid. The protein resides in the chloroplast thylakoid membrane. The catalysed reaction is a plastoquinone + NADH + (n+1) H(+)(in) = a plastoquinol + NAD(+) + n H(+)(out). The enzyme catalyses a plastoquinone + NADPH + (n+1) H(+)(in) = a plastoquinol + NADP(+) + n H(+)(out). The protein is NAD(P)H-quinone oxidoreductase chain 4, chloroplastic of Agrostis stolonifera (Creeping bentgrass).